The primary structure comprises 453 residues: Flavonol-3-O-rhamnosyltransferase (453 aa).

His-24 acts as the Proton acceptor in catalysis. His-24 contributes to the an anthocyanidin binding site. The active-site Charge relay is the Asp-119. Residue His-150 participates in an anthocyanidin binding. Residues Thr-280, Ala-333, His-350, Asn-354, Ser-355, and Glu-358 each contribute to the UDP-beta-L-rhamnose site. Ala-373 lines the an anthocyanidin pocket.

Belongs to the UDP-glycosyltransferase family. In terms of tissue distribution, expressed in leaves, flowers, siliques, and stems. Expressed in the shoot apex.

It catalyses the reaction kaempferol + UDP-beta-L-rhamnose = kaempferol 3-O-alpha-L-rhamnoside + UDP + H(+). The enzyme catalyses UDP-beta-L-rhamnose + quercetin = quercitrin + UDP + H(+). The protein operates within flavonoid metabolism. Flavonol 3-O-rhamnosyltransferase that catalyzes the transfer of rhamnose from UDP-rhamnose to the 3-OH position of kaempferol and quercetin. Possesses low quercetin 3-O-glucosyltransferase activity in vitro. The sequence is that of Flavonol-3-O-rhamnosyltransferase from Arabidopsis thaliana (Mouse-ear cress).